The sequence spans 1256 residues: Centrosome and spindle pole-associated protein 1 (1256 aa).

Coiled coils occupy residues 38 to 62 and 114 to 135; these read ADNLDEFIEEQKARLAEDKAELESD and EDYERKKHKLKEELRQDYRRYL. Over residues 189–208 the composition is skewed to basic and acidic residues; that stretch reads GKEESSEKFRQVEKSTEPKS. Disordered stretches follow at residues 189 to 244 and 381 to 403; these read GKEE…LTPS and AENKSAPDNETSKSANQDTCSPF. A compositionally biased stretch (polar residues) spans 222–232; sequence LTSQIQTSCEN. At Ser-244 the chain carries Phosphoserine. Residues 244–270 are a coiled coil; the sequence is SEAYEELLNQRRLEEDRYRQLDDEIEL. Residues 417 to 449 are a coiled coil; the sequence is QRRKEKYRLELLEQMAEQQRNKRREKDLELRVA. Phosphoserine occurs at positions 459 and 527. Residues 625–669 adopt a coiled-coil conformation; that stretch reads SKQSLQSYQEALQQQIREREERRKKEREEKEEYEAKLEAEMRTYN. Disordered stretches follow at residues 735–757 and 813–853; these read ANKSSGHMQTQSSPFARGNVFGE and EYEE…KKEE. Residues 736–748 are compositionally biased toward polar residues; the sequence is NKSSGHMQTQSSP. Phosphoserine occurs at positions 901 and 920. The disordered stretch occupies residues 913 to 932; the sequence is SSMSRAQSPPVPARKNQLRA. Residues 925–964 adopt a coiled-coil conformation; that stretch reads ARKNQLRAEEEKKNVIMELSEMRKQLRSEERRLQERLLHM. Ser-966 bears the Phosphoserine mark. Disordered stretches follow at residues 1114 to 1147 and 1232 to 1256; these read EDDVLPPPSQLPSARERRRNKWKGLDIDSSRPNV and LNQEQQQIPGKPGTFTWQGLSTAHG. The segment covering 1246–1256 has biased composition (polar residues); it reads FTWQGLSTAHG.

As to quaternary structure, interacts with PLEKHG6. Interacts with ARMC9, TOGARAM1, CCDC66, CEP104 and CEP290. Post-translationally, phosphorylated. Phosphorylation increases in colcemide-treated cells. As to expression, expressed in adult and fetal brain with enrichment in the cerebellum. Detected in testis.

The protein localises to the cytoplasm. It localises to the cytoskeleton. The protein resides in the microtubule organizing center. Its subcellular location is the centrosome. It is found in the spindle. The protein localises to the spindle pole. It localises to the cell projection. The protein resides in the cilium. May play a role in cell-cycle-dependent microtubule organization. The polypeptide is Centrosome and spindle pole-associated protein 1 (CSPP1) (Homo sapiens (Human)).